Consider the following 22-residue polypeptide: Caerin-3.3 (22 aa).

Lysine 22 is modified (lysine amide).

As to expression, expressed by the skin parotoid and/or rostral glands.

The protein localises to the secreted. Its function is as follows. Antibacterial peptide, that adopts an alpha helical conformation which can disrupt bacterial membranes. Each caerin displays a different antimicrobial specificity. This Ranoidea caerulea (Green tree frog) protein is Caerin-3.3.